The chain runs to 98 residues: Integration host factor subunit beta (98 aa).

Positions 59–98 are disordered; the sequence is RTGRNPKTGESVTLPGKYVPHFKPGKEMRDRVNESIQSEG. Positions 82–91 are enriched in basic and acidic residues; it reads PGKEMRDRVN.

This sequence belongs to the bacterial histone-like protein family. Heterodimer of an alpha and a beta chain.

Functionally, this protein is one of the two subunits of integration host factor, a specific DNA-binding protein that functions in genetic recombination as well as in transcriptional and translational control. The protein is Integration host factor subunit beta of Saccharophagus degradans (strain 2-40 / ATCC 43961 / DSM 17024).